The primary structure comprises 189 residues: Class A basic helix-loop-helix protein 15 (189 aa).

A compositionally biased stretch (basic residues) spans 1–12 (MKTKNRPPRRRA). Disordered regions lie at residues 1 to 85 (MKTK…ERER) and 167 to 189 (TEAQ…REGT). Thr25 carries the post-translational modification Phosphothreonine. The span at 68–85 (GRRDSSIQRRLESNERER) shows a compositional bias: basic and acidic residues. In terms of domain architecture, bHLH spans 75–127 (QRRLESNERERQRMHKLNNAFQALREVIPHVRADKKLSKIETLTLAKNYIKSL).

As to quaternary structure, forms homodimers or heterodimers with TCF3 gene products E12 and E47. These dimers bind to the E-box site, however, heterodimer with MYOD1 does not bind target DNA. Expressed in brain, liver, spleen and skeletal muscle.

It is found in the nucleus. Functionally, plays a role in controlling the transcriptional activity of MYOD1, ensuring that expanding myoblast populations remain undifferentiated. Repression may occur through muscle-specific E-box occupancy by homodimers. May also negatively regulate bHLH-mediated transcription through an N-terminal repressor domain. Serves as a key regulator of acinar cell function, stability, and identity. Also required for normal organelle localization in exocrine cells and for mitochondrial calcium ion transport. May function as a unique regulator of gene expression in several different embryonic and postnatal cell lineages. Binds to the E-box consensus sequence 5'-CANNTG-3'. The chain is Class A basic helix-loop-helix protein 15 (BHLHA15) from Homo sapiens (Human).